A 304-amino-acid chain; its full sequence is Tyrosine recombinase XerC (304 aa).

Residues 2–88 (ANVKNFLTLF…ALRSFYKFLL (87 aa)) enclose the Core-binding (CB) domain. The Tyr recombinase domain maps to 109-294 (RIPKFLYEKE…SKDMLRKTYM (186 aa)). Residues R149, K173, H246, R249, and H272 contribute to the active site. Y281 acts as the O-(3'-phospho-DNA)-tyrosine intermediate in catalysis.

This sequence belongs to the 'phage' integrase family. XerC subfamily. In terms of assembly, forms a cyclic heterotetrameric complex composed of two molecules of XerC and two molecules of XerD.

The protein localises to the cytoplasm. Site-specific tyrosine recombinase, which acts by catalyzing the cutting and rejoining of the recombining DNA molecules. The XerC-XerD complex is essential to convert dimers of the bacterial chromosome into monomers to permit their segregation at cell division. It also contributes to the segregational stability of plasmids. The chain is Tyrosine recombinase XerC from Bacillus licheniformis (strain ATCC 14580 / DSM 13 / JCM 2505 / CCUG 7422 / NBRC 12200 / NCIMB 9375 / NCTC 10341 / NRRL NRS-1264 / Gibson 46).